Reading from the N-terminus, the 156-residue chain is Probable cyclic pyranopterin monophosphate synthase (156 aa).

Substrate contacts are provided by residues leucine 74–histidine 76 and methionine 110–glutamate 111. Residue aspartate 125 is part of the active site.

Belongs to the MoaC family. In terms of assembly, homohexamer; trimer of dimers.

The enzyme catalyses (8S)-3',8-cyclo-7,8-dihydroguanosine 5'-triphosphate = cyclic pyranopterin phosphate + diphosphate. Its pathway is cofactor biosynthesis; molybdopterin biosynthesis. In terms of biological role, catalyzes the conversion of (8S)-3',8-cyclo-7,8-dihydroguanosine 5'-triphosphate to cyclic pyranopterin monophosphate (cPMP). The protein is Probable cyclic pyranopterin monophosphate synthase of Thermococcus kodakarensis (strain ATCC BAA-918 / JCM 12380 / KOD1) (Pyrococcus kodakaraensis (strain KOD1)).